Consider the following 342-residue polypeptide: S-adenosylmethionine:tRNA ribosyltransferase-isomerase (342 aa).

It belongs to the QueA family. Monomer.

The protein localises to the cytoplasm. The catalysed reaction is 7-aminomethyl-7-carbaguanosine(34) in tRNA + S-adenosyl-L-methionine = epoxyqueuosine(34) in tRNA + adenine + L-methionine + 2 H(+). It participates in tRNA modification; tRNA-queuosine biosynthesis. Its function is as follows. Transfers and isomerizes the ribose moiety from AdoMet to the 7-aminomethyl group of 7-deazaguanine (preQ1-tRNA) to give epoxyqueuosine (oQ-tRNA). This Streptococcus mutans serotype c (strain ATCC 700610 / UA159) protein is S-adenosylmethionine:tRNA ribosyltransferase-isomerase.